We begin with the raw amino-acid sequence, 255 residues long: 2-dehydro-3,6-dideoxy-6-sulfogluconate aldolase (255 aa).

The active-site Proton acceptor is histidine 38. A divalent metal cation is bound by residues glutamate 141 and aspartate 167.

This sequence belongs to the HpcH/HpaI aldolase family. In terms of assembly, homohexamer; trimer of dimers. Requires a divalent metal cation as cofactor.

It catalyses the reaction 2-dehydro-3,6-dideoxy-6-sulfo-D-gluconate = (2S)-3-sulfolactaldehyde + pyruvate. Catalyzes the retro-aldol cleavage of 2-dehydro-3,6-dideoxy-6-sulfo-D-gluconate to (2S)-3-sulfolactaldehyde and pyruvate. Is involved in a degradation pathway of sulfoquinovose (SQ) that allows P.putida SQ1 to use SQ as the sole carbon and energy source for growth. The protein is 2-dehydro-3,6-dideoxy-6-sulfogluconate aldolase of Pseudomonas putida (Arthrobacter siderocapsulatus).